The sequence spans 437 residues: Phosphomethylpyrimidine synthase (437 aa).

Substrate-binding positions include N69, M98, Y127, H163, 185 to 187, 226 to 229, and E265; these read SRG and DACR. H269 is a binding site for Zn(2+). Residue Y292 coordinates substrate. H333 is a Zn(2+) binding site. [4Fe-4S] cluster is bound by residues C409, C412, and C416.

It belongs to the ThiC family. [4Fe-4S] cluster is required as a cofactor.

It carries out the reaction 5-amino-1-(5-phospho-beta-D-ribosyl)imidazole + S-adenosyl-L-methionine = 4-amino-2-methyl-5-(phosphooxymethyl)pyrimidine + CO + 5'-deoxyadenosine + formate + L-methionine + 3 H(+). It participates in cofactor biosynthesis; thiamine diphosphate biosynthesis. Catalyzes the synthesis of the hydroxymethylpyrimidine phosphate (HMP-P) moiety of thiamine from aminoimidazole ribotide (AIR) in a radical S-adenosyl-L-methionine (SAM)-dependent reaction. The sequence is that of Phosphomethylpyrimidine synthase from Clostridium botulinum (strain Loch Maree / Type A3).